A 545-amino-acid chain; its full sequence is CTP synthase (545 aa).

Residues 1–266 (MTTRYIFVTG…DDLVTKRFGL (266 aa)) form an amidoligase domain region. Ser-14 contributes to the CTP binding site. Position 14 (Ser-14) interacts with UTP. Residues 15–20 (SLGKGI) and Asp-72 contribute to the ATP site. Mg(2+) contacts are provided by Asp-72 and Glu-140. Residues 147-149 (DIE), 187-192 (KTKPTQ), and Lys-223 contribute to the CTP site. UTP-binding positions include 187–192 (KTKPTQ) and Lys-223. 239–241 (KDV) contributes to the ATP binding site. The 252-residue stretch at 291–542 (TIGMVGKYTE…VAAAVAYQKR (252 aa)) folds into the Glutamine amidotransferase type-1 domain. Gly-352 is an L-glutamine binding site. Residue Cys-379 is the Nucleophile; for glutamine hydrolysis of the active site. L-glutamine is bound by residues 380 to 383 (LGMQ), Glu-403, and Arg-470. Residues His-515 and Glu-517 contribute to the active site.

It belongs to the CTP synthase family. Homotetramer.

It carries out the reaction UTP + L-glutamine + ATP + H2O = CTP + L-glutamate + ADP + phosphate + 2 H(+). The catalysed reaction is L-glutamine + H2O = L-glutamate + NH4(+). The enzyme catalyses UTP + NH4(+) + ATP = CTP + ADP + phosphate + 2 H(+). The protein operates within pyrimidine metabolism; CTP biosynthesis via de novo pathway; CTP from UDP: step 2/2. With respect to regulation, allosterically activated by GTP, when glutamine is the substrate; GTP has no effect on the reaction when ammonia is the substrate. The allosteric effector GTP functions by stabilizing the protein conformation that binds the tetrahedral intermediate(s) formed during glutamine hydrolysis. Inhibited by the product CTP, via allosteric rather than competitive inhibition. Catalyzes the ATP-dependent amination of UTP to CTP with either L-glutamine or ammonia as the source of nitrogen. Regulates intracellular CTP levels through interactions with the four ribonucleotide triphosphates. The protein is CTP synthase of Shewanella loihica (strain ATCC BAA-1088 / PV-4).